We begin with the raw amino-acid sequence, 559 residues long: NXPE family member 2 (559 aa).

Residues 17 to 37 (AIARKLLLMLTFILIFWIIYL) traverse the membrane as a helical segment.

The protein belongs to the NXPE family.

It is found in the membrane. The polypeptide is NXPE family member 2 (NXPE2) (Homo sapiens (Human)).